An 88-amino-acid chain; its full sequence is MWQSVGLTVLVIVATLICVLLFMLFGWYVVWQLFLSKFKFLRELVGDTGSPQAETEPSESESERSSPPTPRQRPKTARQRVIPPDSTT.

Residues 10–30 (LVIVATLICVLLFMLFGWYVV) form a helical membrane-spanning segment. The interval 48-88 (TGSPQAETEPSESESERSSPPTPRQRPKTARQRVIPPDSTT) is disordered.

This sequence belongs to the SMIM13 family.

It is found in the membrane. This Danio rerio (Zebrafish) protein is Small integral membrane protein 13 (smim13).